Reading from the N-terminus, the 287-residue chain is Elongation factor Ts (287 aa).

The interval Thr80–Leu83 is involved in Mg(2+) ion dislocation from EF-Tu.

Belongs to the EF-Ts family.

It localises to the cytoplasm. Functionally, associates with the EF-Tu.GDP complex and induces the exchange of GDP to GTP. It remains bound to the aminoacyl-tRNA.EF-Tu.GTP complex up to the GTP hydrolysis stage on the ribosome. The sequence is that of Elongation factor Ts from Pseudomonas fluorescens (strain Pf0-1).